Here is a 506-residue protein sequence, read N- to C-terminus: Gamma-aminobutyric acid receptor subunit epsilon (506 aa).

Positions 1–17 (MLPKVLLMLLNMFLALQ) are cleaved as a signal peptide. The Extracellular portion of the chain corresponds to 18-277 (WRVGPHIKLE…MTFFFNVSRR (260 aa)). A disordered region spans residues 32 to 65 (AQDKVVFGPQPQPSGKKLPARETELTADHTTERP). Basic and acidic residues predominate over residues 50 to 65 (PARETELTADHTTERP). N-linked (GlcNAc...) asparagine glycosylation occurs at Asn-135. Cys-196 and Cys-210 form a disulfide bridge. An N-linked (GlcNAc...) asparagine glycan is attached at Asn-253. The chain crosses the membrane as a helical span at residues 278-298 (FGFIVFQNYIPSSVTTMLSWV). Residues 299 to 308 (SFWIKIEAAA) lie on the Cytoplasmic side of the membrane. The helical transmembrane segment at 309–328 (ARASVGVSSVLTMATLGTFS) threads the bilayer. At 329–344 (RKNFPRVSYLTALDFY) the chain is on the extracellular side. The helical transmembrane segment at 345-365 (IAICFVLCFCTLLEFTVLNFL) threads the bilayer. Over 366-485 (TYNNIERQAS…HVYRLDNYSR (120 aa)) the chain is Cytoplasmic. Residues 486-506 (VLFPITFFFFNVVYWVICLNL) traverse the membrane as a helical segment.

Belongs to the ligand-gated ion channel (TC 1.A.9) family. Gamma-aminobutyric acid receptor (TC 1.A.9.5) subfamily. GABRE sub-subfamily. In terms of assembly, heteropentamer, formed by a combination of alpha (GABRA1-6), beta (GABRB1-3), gamma (GABRG1-3), delta (GABRD), epsilon (GABRE), rho (GABRR1-3), pi (GABRP) and theta (GABRQ) chains, each subunit exhibiting distinct physiological and pharmacological properties. Expressed in brain and heart. Strongly expressed in locus ceruleus from the first postnatal day. Weakly expressed in other brainstem nuclei and in the hypothalamus. Found in the cerebral cortex of pups.

The protein localises to the cell membrane. The protein resides in the postsynaptic cell membrane. The catalysed reaction is chloride(in) = chloride(out). Its function is as follows. Epsilon subunit of the heteropentameric ligand-gated chloride channel gated by gamma-aminobutyric acid (GABA), a major inhibitory neurotransmitter in the brain. GABA-gated chloride channels, also named GABA(A) receptors (GABAAR), consist of five subunits arranged around a central pore and contain GABA active binding site(s) located at the alpha and beta subunit interfaces. When activated by GABA, GABAARs selectively allow the flow of chloride anions across the cell membrane down their electrochemical gradient. GABARs containing epsilon subunit may also permit spontaneous chloride channel activity while preserving the structural information required for GABA-gated openings. GABARs containing epsilon subunit may regulate cardiac function. This Rattus norvegicus (Rat) protein is Gamma-aminobutyric acid receptor subunit epsilon.